The sequence spans 396 residues: S-adenosylmethionine synthase 3 (396 aa).

Glu13 lines the Mg(2+) pocket. His19 contacts ATP. Glu47 contacts K(+). L-methionine-binding residues include Glu60 and Gln103. Residues 171 to 173 (DGK), 239 to 242 (SGRF), Asp250, 256 to 257 (RK), Ala273, Lys277, and Lys281 each bind ATP. Asp250 lines the L-methionine pocket. Lys281 contacts L-methionine.

The protein belongs to the AdoMet synthase family. In terms of assembly, homotetramer. Requires Mn(2+) as cofactor. The cofactor is Mg(2+). Co(2+) serves as cofactor. K(+) is required as a cofactor. As to expression, expressed in roots, stems and leaves (at protein level).

The protein localises to the cytoplasm. It catalyses the reaction L-methionine + ATP + H2O = S-adenosyl-L-methionine + phosphate + diphosphate. It functions in the pathway amino-acid biosynthesis; S-adenosyl-L-methionine biosynthesis; S-adenosyl-L-methionine from L-methionine: step 1/1. In terms of biological role, catalyzes the formation of S-adenosylmethionine from methionine and ATP. The reaction comprises two steps that are both catalyzed by the same enzyme: formation of S-adenosylmethionine (AdoMet) and triphosphate, and subsequent hydrolysis of the triphosphate. May be involved in the synthesis of betain in response to abiotic stress such as high salinity. The chain is S-adenosylmethionine synthase 3 (SAMS3) from Atriplex nummularia (Old man saltbush).